The chain runs to 157 residues: AM-toxin biosynthesis protein 15 (157 aa).

A disordered region spans residues 17 to 43 (RARHWDSKQGSSNSDVASGGSEVAGNS).

It participates in mycotoxin biosynthesis. Functionally, part of the gene clusters that mediate the biosynthesis of AM-toxins, host-selective toxins (HSTs) causing Alternaria blotch on apple, a worldwide distributed disease. AM-toxins are cyclic depsipeptides containing the 3 residues 2-hydroxy-isovaleric acid (2-HIV), dehydroalanine, L-alanine which are common for all 3 AM-toxins I to III. The fourth precursor is L-alpha-amino-methoxyphenyl-valeric acid (L-Amv) for AM-toxin I, L-alpha-amino-phenyl-valeric acid (L-Apv) for AM-toxin II, and L-alpha-amino-hydroxyphenyl-valeric acid (L-Ahv) for AM-toxin III. AM-toxins have two target sites for affecting susceptible apple cells; they cause invagination of the plasma membrane and electrolyte loss and chloroplast disorganization. The non-ribosomal peptide synthetase AMT1 contains 4 catalytic modules and is responsible for activation of each residue in AM-toxin. The aldo-keto reductase AMT2 catalyzes the conversion of 2-keto-isovaleric acid (2-KIV) to 2-hydroxy-isovaleric acid (2-HIV), one of the precursor residues incorporated by AMT1 during AM-toxin biosynthesis, by reduction of its ketone to an alcohol. The cytochrome P450 monooxygenase AMT3 and the thioesterase AMT4 are also important for AM-toxin production, but their exact function within the AM-toxin biosynthesis are not known yet. Up to 21 proteins (including AMT1 to AMT4) are predicted to be involved in AM-toxin biosynthesis since their expression ishighly up-regulated in AM-toxin-producing cultures. This chain is AM-toxin biosynthesis protein 15, found in Alternaria alternata (Alternaria rot fungus).